The primary structure comprises 548 residues: MESMMAAHPMYMMQYQYDNRQHAHYAHLPSQQPMAFYPAVPMVPSTPTYSRPASACSQPAMQSMKQMPMTSYPSAMTPMASPQPMARRSNIVLETEACDWEGKRHQAHGIYYPSTPPLSSSGSAISSPESCDMLSTPMNPMFSGLDSIESIKPEVNSPESFPVLEWTSCASPPMTPVYLNNVNNNLHSKQNLRPAPTSSCSPELAPAVSACPSLSPSPVPQTRSFTSETSFCDPRNLTVGNVTLGLEPASLSTETLVAQADNSFVFVAPQAAPTWDAISELESEEDFVKGLVNLDDSKSDAQGTRTRASSDAVSLNFDEVEAFPLLPTAHTHSDDDCHKSKRQRTCGGPKMDSATNESASSAAAPSSEQQQQPKSSDVPSNEETKSNSGASTNSDGTGLPAPTSRRGRKQSLTEDPSKAFKCELCDRRFRRQEHLKRHYRSLHTQDKPFECNECGKKFSRSDNLTQHARTHGSGAIPLNIMGEEDLAAAAANGYMHPPQHMYSMVPNVPTLPDYNSYGKVLFQIAAEVPGSASDYSDDGSERKRKRTD.

2 C2H2-type zinc fingers span residues Phe420 to Pro448 and Phe449 to His471.

Interacts with HOG1/OSM1.

Its subcellular location is the nucleus. It localises to the cytoplasm. In terms of biological role, transcription factor that acts as a key downstream transcription factor in the HOG1-MAPK pathway. Regulates the expression of a series of downstream genes and controls vegetative growth, conidiogenesis, cell wall integrity, stress response, mitochondrial morphology, and pathogenicity. Binds to a putative promoter region 1500 bp upstream of the start codons of the target genes MGG_07019, POX1 and DCI1. Binds to the AGGGG and CCCCT motif of the COS1 promoter region. Involved in fatty acid beta-oxidation by directly regulating the expression of the dienoyl-CoA isomerase DCI1, thereby facilitating invasive hyphal growth during the early infection stage. Targets also the 3-methylglutaconyl-CoA hydratase-encoding gene (AUH1) to control mitochondrial morphology and mitophagy, which are critical for the infectious growth of the pathogen. The protein is C2H2-type transcription factor MSN2 of Pyricularia oryzae (strain 70-15 / ATCC MYA-4617 / FGSC 8958) (Rice blast fungus).